The sequence spans 201 residues: Potassium-transporting ATPase KdpC subunit (201 aa).

Residues 7 to 29 (PALVLLTALTAITGLAYPLAMTG) form a helical membrane-spanning segment.

The protein belongs to the KdpC family. In terms of assembly, the system is composed of three essential subunits: KdpA, KdpB and KdpC.

The protein localises to the cell inner membrane. Part of the high-affinity ATP-driven potassium transport (or Kdp) system, which catalyzes the hydrolysis of ATP coupled with the electrogenic transport of potassium into the cytoplasm. This subunit acts as a catalytic chaperone that increases the ATP-binding affinity of the ATP-hydrolyzing subunit KdpB by the formation of a transient KdpB/KdpC/ATP ternary complex. The sequence is that of Potassium-transporting ATPase KdpC subunit from Methylorubrum populi (strain ATCC BAA-705 / NCIMB 13946 / BJ001) (Methylobacterium populi).